The sequence spans 442 residues: QWRF motif-containing protein 6 (442 aa).

Disordered stretches follow at residues 1-144 (MEAK…LSQQ) and 221-240 (FSRL…ADTK). The span at 57 to 66 (KQHHLQHHQI) shows a compositional bias: basic residues. Residues 80-89 (KMADGDENRS) are compositionally biased toward basic and acidic residues. Positions 264 to 267 (QWRF) match the QWRF motif motif.

It belongs to the QWRF family.

This is QWRF motif-containing protein 6 (QWRF6) from Arabidopsis thaliana (Mouse-ear cress).